We begin with the raw amino-acid sequence, 279 residues long: Movement protein (279 aa).

It belongs to the cucumovirus movement protein family.

It localises to the host cell junction. It is found in the host plasmodesma. Functionally, transports viral genome to neighboring plant cells directly through plasmosdesmata, without any budding. The movement protein allows efficient cell to cell propagation, by bypassing the host cell wall barrier. Acts by forming a tubular structure at the host plasmodesmata, enlarging it enough to allow free passage of virion capsids. The polypeptide is Movement protein (Cucumis sativus (Cucumber)).